Consider the following 51-residue polypeptide: Large ribosomal subunit protein eL39 (51 aa).

This sequence belongs to the eukaryotic ribosomal protein eL39 family.

Binds specifically to a region in 26S rRNA near the subunit interface. This chain is Large ribosomal subunit protein eL39 (rpl39e), found in Sulfolobus acidocaldarius (strain ATCC 33909 / DSM 639 / JCM 8929 / NBRC 15157 / NCIMB 11770).